The sequence spans 586 residues: Mitogen-activated protein kinase 15 (586 aa).

Residues 14-305 (YDIKKRLGKG…AEEALEHPYV (292 aa)) enclose the Protein kinase domain. Residues 20-28 (LGKGAYGIV) and Lys43 each bind ATP. Asp138 functions as the Proton acceptor in the catalytic mechanism. 2 disordered regions span residues 354-506 (QKRE…DAPP) and 520-539 (NQRTAPIQGRDPRSAPRFGR). The span at 382–393 (PAPPAGTNPAPQ) shows a compositional bias: pro residues. A compositionally biased stretch (low complexity) spans 400–414 (PQRAAIAAPNQPPAQ). The span at 415-439 (KDSTQQSPKIKAPSSNPITHSTTHG) shows a compositional bias: polar residues. The span at 452-463 (AGQQGAAGTTAQ) shows a compositional bias: low complexity. Residues 464–473 (EVRKEVESRS) are compositionally biased toward basic and acidic residues. The segment covering 484–498 (FSHSQQARAAATNSA) has biased composition (polar residues).

In terms of assembly, interacts with dvl2.

The protein resides in the cytoplasm. It localises to the cytoskeleton. It is found in the cilium basal body. Its subcellular location is the cell projection. The protein localises to the cilium. The protein resides in the cell junction. The enzyme catalyses L-seryl-[protein] + ATP = O-phospho-L-seryl-[protein] + ADP + H(+). The catalysed reaction is L-threonyl-[protein] + ATP = O-phospho-L-threonyl-[protein] + ADP + H(+). Atypical MAPK protein that regulates ciliogenesis by phosphorylating rcsd1 through its binding with dvl2. In Xenopus laevis (African clawed frog), this protein is Mitogen-activated protein kinase 15.